Here is a 451-residue protein sequence, read N- to C-terminus: Potassium/sodium uptake protein NtpJ (451 aa).

A run of 11 helical transmembrane segments spans residues 18-38 (IAAG…LPFF), 46-66 (HFID…LTTL), 78-98 (FLIM…PILF), 133-153 (ILKF…VVFI), 162-182 (IWFS…DLLG), 192-212 (VYLI…FIVW), 230-250 (VALS…LITE), 293-313 (LILT…AGGL), 350-370 (ALTL…VLSV), 380-400 (IEYI…TMGL), and 410-430 (LVII…VFSL).

It belongs to the TrkH potassium transport family.

The protein resides in the cell membrane. Mediates electrogenic transport of potassium as well as sodium. Acts probably as a potassium-sodium cotransporter. Major sodium reentry pathway at high pH values. This chain is Potassium/sodium uptake protein NtpJ (ntpJ), found in Enterococcus hirae (strain ATCC 9790 / DSM 20160 / JCM 8729 / LMG 6399 / NBRC 3181 / NCIMB 6459 / NCDO 1258 / NCTC 12367 / WDCM 00089 / R).